We begin with the raw amino-acid sequence, 230 residues long: Ubiquitin carboxyl-terminal hydrolase isozyme L3 (230 aa).

The UCH catalytic domain maps to 5–229 (RWLPLEANPE…LRFNAIALSA (225 aa)). The tract at residues 8–13 (PLEANP) is interaction with ubiquitin. Cys95 functions as the Nucleophile in the catalytic mechanism. A Phosphoserine modification is found at Ser130. Residues 152-159 (AHEGQTEA) are interaction with ubiquitin. Crossover loop which restricts access of large ubiquitin adducts to the active site. The active-site Proton donor is His169. Residues 219–224 (ELRFNA) form an interaction with ubiquitin region.

The protein belongs to the peptidase C12 family. As to quaternary structure, preferentially binds diubiquitin; the interaction does not hydrolyze diubiquitin but, in vitro, inhibits the hydrolyzing activity on other substrates.

The protein resides in the cytoplasm. The enzyme catalyses Thiol-dependent hydrolysis of ester, thioester, amide, peptide and isopeptide bonds formed by the C-terminal Gly of ubiquitin (a 76-residue protein attached to proteins as an intracellular targeting signal).. Inhibited by monoubiquitin and diubiquitin. Functionally, deubiquitinating enzyme (DUB) that controls levels of cellular ubiquitin through processing of ubiquitin precursors and ubiquitinated proteins. Thiol protease that recognizes and hydrolyzes a peptide bond at the C-terminal glycine of either ubiquitin or NEDD8. Has a 10-fold preference for Arg and Lys at position P3, and exhibits a preference towards 'Lys-48'-linked ubiquitin chains. Deubiquitinates ENAC in apical compartments, thereby regulating apical membrane recycling. Indirectly increases the phosphorylation of IGFIR, AKT and FOXO1 and promotes insulin-signaling and insulin-induced adipogenesis. Required for stress-response retinal, skeletal muscle and germ cell maintenance. May be involved in working memory. Can hydrolyze UBB(+1), a mutated form of ubiquitin which is not effectively degraded by the proteasome. The polypeptide is Ubiquitin carboxyl-terminal hydrolase isozyme L3 (UCHL3) (Sus scrofa (Pig)).